We begin with the raw amino-acid sequence, 86 residues long: Large ribosomal subunit protein uL23 (86 aa).

It belongs to the universal ribosomal protein uL23 family. As to quaternary structure, part of the 50S ribosomal subunit. Contacts protein L29.

Functionally, binds to 23S rRNA. One of the proteins that surrounds the polypeptide exit tunnel on the outside of the ribosome. The polypeptide is Large ribosomal subunit protein uL23 (Methanococcus maripaludis (strain DSM 14266 / JCM 13030 / NBRC 101832 / S2 / LL)).